Here is a 149-residue protein sequence, read N- to C-terminus: Calmodulin (149 aa).

Alanine 2 is modified (N-acetylalanine). EF-hand domains are found at residues 8-43 (EQIA…LGQN), 44-79 (PTEA…KMKD), 81-116 (DTEE…LGEK), and 117-149 (LTDE…MMAK). Ca(2+)-binding residues include aspartate 21, aspartate 23, aspartate 25, threonine 27, glutamate 32, aspartate 57, aspartate 59, asparagine 61, threonine 63, glutamate 68, aspartate 94, aspartate 96, asparagine 98, and glutamate 105. At lysine 116 the chain carries N6,N6,N6-trimethyllysine. Ca(2+) contacts are provided by aspartate 130, aspartate 132, aspartate 134, histidine 136, and glutamate 141.

Belongs to the calmodulin family.

Its function is as follows. Calmodulin mediates the control of a large number of enzymes, ion channels and other proteins by Ca(2+). Among the enzymes to be stimulated by the calmodulin-Ca(2+) complex are a number of protein kinases and phosphatases. The polypeptide is Calmodulin (Stylonychia lemnae (Ciliate)).